A 309-amino-acid chain; its full sequence is tRNA dimethylallyltransferase (309 aa).

13-20 is an ATP binding site; that stretch reads GPTAVGKS. Substrate is bound at residue 15 to 20; the sequence is TAVGKS.

This sequence belongs to the IPP transferase family. As to quaternary structure, monomer. The cofactor is Mg(2+).

It carries out the reaction adenosine(37) in tRNA + dimethylallyl diphosphate = N(6)-dimethylallyladenosine(37) in tRNA + diphosphate. Its function is as follows. Catalyzes the transfer of a dimethylallyl group onto the adenine at position 37 in tRNAs that read codons beginning with uridine, leading to the formation of N6-(dimethylallyl)adenosine (i(6)A). This chain is tRNA dimethylallyltransferase, found in Lacticaseibacillus casei (strain BL23) (Lactobacillus casei).